A 453-amino-acid polypeptide reads, in one-letter code: Ribosomal protein uS12 methylthiotransferase RimO (453 aa).

In terms of domain architecture, MTTase N-terminal spans 5–120; it reads PKVGFVSLGC…VMQAVHSHLP (116 aa). [4Fe-4S] cluster-binding residues include cysteine 14, cysteine 50, cysteine 79, cysteine 151, cysteine 155, and cysteine 158. The 246-residue stretch at 137–382 folds into the Radical SAM core domain; that stretch reads LTPRHYAYLK…MEVAEEVSAR (246 aa). The TRAM domain occupies 385-453; it reads ARKVGKTLKV…ADGHDLWGEV (69 aa).

This sequence belongs to the methylthiotransferase family. RimO subfamily. [4Fe-4S] cluster serves as cofactor.

The protein resides in the cytoplasm. It carries out the reaction L-aspartate(89)-[ribosomal protein uS12]-hydrogen + (sulfur carrier)-SH + AH2 + 2 S-adenosyl-L-methionine = 3-methylsulfanyl-L-aspartate(89)-[ribosomal protein uS12]-hydrogen + (sulfur carrier)-H + 5'-deoxyadenosine + L-methionine + A + S-adenosyl-L-homocysteine + 2 H(+). Its function is as follows. Catalyzes the methylthiolation of an aspartic acid residue of ribosomal protein uS12. The chain is Ribosomal protein uS12 methylthiotransferase RimO from Burkholderia multivorans (strain ATCC 17616 / 249).